Reading from the N-terminus, the 316-residue chain is MFGFLLLLSLPFILYLVTPKIRKMLSSGVCTSNVQLPGKVAIVTGANTGIGKETAKDLAQRGARVYLACRDVDKGELAAREIQAVTGNSQVFVRKLDLADTKSIRAFAKDFLAEEKHLHLLINNAGVMMCPYSKTADGFEMHIGVNHLGHFLLTHLLLEKLKESAPSRIVNLSSLGHHLGRIHFHNLQGEKFYSAGLAYCHSKLANILFTKELAKRLKGSGVTTYSVHPGTVHSELTRYSSIMRWLWQLFFVFIKTPQEGAQTSLYCALTEGLESLSGSHFSDCQLAWVSYQGRNEIIARRLWDVSCDLLGLPVDW.

Residues 1-21 (MFGFLLLLSLPFILYLVTPKI) traverse the membrane as a helical; Signal-anchor for type II membrane protein segment. The Cytoplasmic segment spans residues 22–316 (RKMLSSGVCT…CDLLGLPVDW (295 aa)). An NADP(+)-binding site is contributed by 45–51 (GANTGIG). K109 is modified (N6-acetyllysine). S174 lines the substrate pocket. Y199 (proton acceptor) is an active-site residue.

Belongs to the short-chain dehydrogenases/reductases (SDR) family. Post-translationally, not glycosylated. As to expression, expressed at high level in liver and testis. Expressed at lower levels in smooth muscle, thymus, submaxillary gland and epididymis. In testis, expression is restricted to pachytene spermatocytes. Also expressed in four layers of the retina, including the outer segment of rods and cones.

Its subcellular location is the endoplasmic reticulum membrane. The enzyme catalyses all-trans-retinol + NADP(+) = all-trans-retinal + NADPH + H(+). It carries out the reaction 11-cis-retinol + NADP(+) = 11-cis-retinal + NADPH + H(+). It catalyses the reaction 9-cis-retinol + NADP(+) = 9-cis-retinal + NADPH + H(+). The catalysed reaction is 13-cis-retinol + NADP(+) = 13-cis-retinal + NADPH + H(+). The enzyme catalyses a medium-chain primary fatty alcohol + NADP(+) = a medium-chain fatty aldehyde + NADPH + H(+). It carries out the reaction (2E,6Z)-nona-2,6-dien-1-ol + NADP(+) = (2E,6Z)-nona-2,6-dienal + NADPH + H(+). It catalyses the reaction (E)-oct-2-en-1-ol + NADP(+) = (2E)-octenal + NADPH + H(+). The catalysed reaction is (E)-non-2-en-1-ol + NADP(+) = (E)-non-2-enal + NADPH + H(+). The enzyme catalyses heptan-1-ol + NADP(+) = heptanal + NADPH + H(+). It carries out the reaction hexan-1-ol + NADP(+) = hexanal + NADPH + H(+). It catalyses the reaction decan-1-ol + NADP(+) = decanal + NADPH + H(+). The catalysed reaction is nonan-1-ol + NADP(+) = nonanal + NADPH + H(+). The enzyme catalyses octan-1-ol + NADP(+) = octanal + NADPH + H(+). It carries out the reaction (Z)-non-6-en-1-ol + NADP(+) = (Z)-non-6-enal + NADPH + H(+). It functions in the pathway cofactor metabolism; retinol metabolism. In terms of biological role, retinol dehydrogenase with a clear preference for NADP. Displays high activity towards 9-cis, 11-cis and all-trans-retinol, and to a lesser extent on 13-cis-retinol. Also exhibits reductive activity towards toxic lipid peroxidation products such as medium-chain aldehydes trans-2-nonenal, nonanal, and cis-6-nonenal. Has no dehydrogenase activity towards steroid. Seems to be required for homeostasis of retinol in liver and testis. This is Retinol dehydrogenase 11 (Rdh11) from Mus musculus (Mouse).